A 441-amino-acid polypeptide reads, in one-letter code: Endothelin receptor type B (441 aa).

The signal sequence occupies residues 1-26; it reads MQPLPSLCGRALVALILACGVAGIQA. The Extracellular segment spans residues 27–100; sequence EEREFPPAGA…GPIEIKETFK (74 aa). The interval 30–87 is disordered; that stretch reads EFPPAGATQPLPGTGEMMETPTETSWPGRSNASDPRSSATPQIPRGGRMAGIPPRTPP. Residues 41–53 are compositionally biased toward low complexity; that stretch reads PGTGEMMETPTET. Over residues 54 to 70 the composition is skewed to polar residues; it reads SWPGRSNASDPRSSATP. A helical transmembrane segment spans residues 101-125; that stretch reads YINTVVSCLVFVLGIIGNSTLLRII. Over 126-136 the chain is Cytoplasmic; that stretch reads YKNKCMRNGPN. Residues 137-162 traverse the membrane as a helical segment; it reads ILIASLALGDLLHIIIDIPINTYKLL. The Extracellular portion of the chain corresponds to 163 to 174; it reads AKDWPFGVEMCK. Cysteine 173 and cysteine 254 are oxidised to a cystine. The chain crosses the membrane as a helical span at residues 175-196; that stretch reads LVPFIQKASVGITVLSLCALSI. Residues 197-217 are Cytoplasmic-facing; that stretch reads DRYRAVASWSRIKGIGVPKWT. Residues 218 to 242 traverse the membrane as a helical segment; that stretch reads AVEIVLIWVVSVVLAVPEAVGFDII. The Extracellular segment spans residues 243-270; sequence TSDHIGNKLRICLLHPTQKTAFMQFYKT. The chain crosses the membrane as a helical span at residues 271–295; it reads AKDWWLFSFYFCLPLAITALFYTLM. Residues 296-323 lie on the Cytoplasmic side of the membrane; the sequence is TCEMLRKKSGMQIALNDHLKQRREVAKT. Serine 304 carries the post-translational modification Phosphoserine. Residues 324–349 form a helical membrane-spanning segment; sequence VFCLVLVFALCWLPLHLSRILKLTLY. Topologically, residues 350-361 are extracellular; it reads DQHDPRRCEFLS. Residues 362–388 form a helical membrane-spanning segment; that stretch reads FLLVLDYIGINMASLNSCINPIALYLV. At 389–441 the chain is on the cytoplasmic side; that stretch reads SKRFKNCFKSCLCCWCQSFEEKQSLEEKQSCLKFKANDHGYDNFRSSNKYSSS. 2 S-palmitoyl cysteine lipidation sites follow: cysteine 402 and cysteine 404. Residues serine 418, serine 434, and serine 435 each carry the phosphoserine modification. Tyrosine 438 is modified (phosphotyrosine). Phosphoserine occurs at positions 439, 440, and 441.

The protein belongs to the G-protein coupled receptor 1 family. Endothelin receptor subfamily. EDNRB sub-subfamily. It is not sure whether phosphorylation is on Ser-434 or Ser-435.

It localises to the cell membrane. Non-specific receptor for endothelin 1, 2, and 3. Mediates its action by association with G proteins that activate a phosphatidylinositol-calcium second messenger system. This is Endothelin receptor type B (EDNRB) from Bos taurus (Bovine).